The following is a 180-amino-acid chain: Ribosome maturation factor RimM (180 aa).

The PRC barrel domain occupies 104 to 177; it reads EGEFHLLDLV…WLLLTPPPGL (74 aa).

It belongs to the RimM family. In terms of assembly, binds ribosomal protein uS19.

The protein localises to the cytoplasm. Functionally, an accessory protein needed during the final step in the assembly of 30S ribosomal subunit, possibly for assembly of the head region. Essential for efficient processing of 16S rRNA. May be needed both before and after RbfA during the maturation of 16S rRNA. It has affinity for free ribosomal 30S subunits but not for 70S ribosomes. The protein is Ribosome maturation factor RimM of Synechococcus sp. (strain CC9902).